Reading from the N-terminus, the 511-residue chain is Small ribosomal subunit protein uS4m (511 aa).

One can recognise an S4 RNA-binding domain in the interval 202-272; the sequence is KRLDVVLYRS…IKNNLFSNIN (71 aa).

Belongs to the universal ribosomal protein uS4 family.

The protein resides in the mitochondrion. The chain is Small ribosomal subunit protein uS4m (RPS4) from Prototheca wickerhamii.